A 22-amino-acid chain; its full sequence is Mu-conotoxin KIIIB (22 aa).

Positions 1 to 2 (KR) are excised as a propeptide. 7 cysteine pairs are disulfide-bonded: cysteine 5-cysteine 13, cysteine 5-cysteine 19, cysteine 5-cysteine 20, cysteine 6-cysteine 13, cysteine 6-cysteine 19, cysteine 8-cysteine 19, and cysteine 8-cysteine 20. 2 pharmacophore key residues regions span residues 14–16 (RDH) and 18–19 (RC). Cysteine 20 is subject to Cysteine amide.

This sequence belongs to the conotoxin M superfamily. Monomer. In terms of processing, toxins with three different disulfide connectivities have been synthesized. The conotoxin mu-KIIIA-P1 shows the connectivity C1-C5, C2-C4, and C3-C6, whereas mu-KIIIA-P2 shows the connectivity C1-C6, C2-C4, and C3-C5. The conotoxin mu-KIIIA-N has the 'native' fold of the mu-conotoxin family (C1-C4, C2-C5, and C3-C6). Mu-KIIIA-P1 and mu-KIIIA-P2 are obtained by both thermodynamic oxidative folding and regioselective synthesis. Mu-KIIIA-P1 is the major oxidative folding product. Mu-KIIIA-N is only obtained by regioselective synthesis. As to expression, expressed by the venom duct.

Its subcellular location is the secreted. Mu-conotoxin KIIIA-P1: mu-conotoxins block voltage-gated sodium channels (Nav). This toxin potently blocks Nav1.2/SCN2A (IC(50)5-124 nM), Nav1.4/SCN4A (IC(50)=20-90 nM), and Nav1.7/SCN9A (IC(50)=290-413 nM). It moderately blocks Nav1.1/SCN1A, and mNav1.6/SCN8A. It also shows a very low activity on Nav1.3/SCN3A. This toxin binds a microsite within the pore different from the tetrodotoxin binding site 1 (tested on Nav1.2). The block is partial, with a residual current that can be completely blocked by TTX. The toxin probably docks at a more superficial site in the outer vestibule of the channel than does TTX. On rNav1.2/SCN2A, it produces a block that is only partially reversible. The block of Nav1.7 is modified when beta-subunits are coexpressed with the alpha subunit. Hence, blocks of channels containing beta-1 and beta-3 subunits are more potent (compared to channels without beta subunits), whereas blocks of channels containing beta-2 and beta-4 subunits are less potent (compared to channels without beta subunits). Functionally, mu-conotoxin KIIIA-P2: This toxin potently blocks Nav1.2/SCN2A (Kd=230 nM, IC(50)=1.37 uM) and Nav1.4/SCN4A (Kd=830 nM, IC(50)=2 uM). It also moderately blocks Nav1.7/SCN9A (Kd=1.57 uM, IC(50)=5.4 uM). In addition, this toxin may also inhibit other sodium channels, as does Mu-conotoxin KIIIA-P1. Its function is as follows. Mu-conotoxin KIIIA-N: This toxin moderately blocks Nav1.2/SCN2A (IC(50)=875 nM), Nav1.4/SCN4A (IC(50)=472 nM), and Nav1.7/SCN9A (IC(50)=887 nM). In terms of biological role, mu-conotoxin KIIIB-P1: This toxin potently blocks Nav1.2/SCN2A (Kd=470 nM). In addition, this toxin may also inhibit other sodium channels, as does Mu-conotoxin KIIIA-P1. Mu-conotoxin KIIIB-P2: This toxin potently blocks Nav1.2/SCN2A (Kd=26 nM). In addition, this toxin may also inhibit other sodium channels, as does Mu-conotoxin KIIIA-P1. This chain is Mu-conotoxin KIIIB, found in Conus kinoshitai (Kinoshita's cone).